The following is a 20-amino-acid chain: Phospholipase A2 II-5b (20 aa).

Belongs to the phospholipase A2 family. Group I subfamily. Ca(2+) serves as cofactor. As to expression, expressed by the venom gland.

The protein resides in the secreted. The catalysed reaction is a 1,2-diacyl-sn-glycero-3-phosphocholine + H2O = a 1-acyl-sn-glycero-3-phosphocholine + a fatty acid + H(+). Functionally, snake venom phospholipase A2 (PLA2) that exhibits weak enzymatic activity. PLA2 catalyzes the calcium-dependent hydrolysis of the 2-acyl groups in 3-sn-phosphoglycerides. This Notechis scutatus scutatus (Mainland tiger snake) protein is Phospholipase A2 II-5b.